Consider the following 160-residue polypeptide: Large ribosomal subunit protein uL30m (160 aa).

Residues 1-34 (MAGVLRSAFPRPPCRLQTVKKGAESLIGTEWIRH) constitute a mitochondrion transit peptide. Residues 44-64 (KVFQPKPEDHEKYGGDPQNPH) are disordered.

It belongs to the universal ribosomal protein uL30 family. Component of the mitochondrial ribosome large subunit (39S) which comprises a 16S rRNA and about 50 distinct proteins.

The protein localises to the mitochondrion. In Mus musculus (Mouse), this protein is Large ribosomal subunit protein uL30m (Mrpl30).